A 355-amino-acid chain; its full sequence is Ribosomal RNA large subunit methyltransferase M (355 aa).

S-adenosyl-L-methionine is bound by residues S183, 216 to 219 (SPGG), D235, D255, and D271. K300 functions as the Proton acceptor in the catalytic mechanism.

Belongs to the class I-like SAM-binding methyltransferase superfamily. RNA methyltransferase RlmE family. RlmM subfamily. In terms of assembly, monomer.

It is found in the cytoplasm. The catalysed reaction is cytidine(2498) in 23S rRNA + S-adenosyl-L-methionine = 2'-O-methylcytidine(2498) in 23S rRNA + S-adenosyl-L-homocysteine + H(+). Its function is as follows. Catalyzes the 2'-O-methylation at nucleotide C2498 in 23S rRNA. This is Ribosomal RNA large subunit methyltransferase M from Pseudomonas putida (strain W619).